The sequence spans 86 residues: Protein GOLVEN 1 (86 aa).

Positions 1–29 are cleaved as a signal peptide; sequence MSCSLRSGLVIVFCFILLLLSSNVGCASA. Residues 30-70 constitute a propeptide that is removed on maturation; that stretch reads ARRLRSHKHHHHKVASLDVFNGGERRRALGGVETGEEVVVM. Tyr72 bears the Sulfotyrosine mark. A Hydroxyproline modification is found at Pro80. The propeptide occupies 84 to 86; sequence EKS.

Belongs to the RGF family. As to quaternary structure, binds to LRR receptor-like serine/threonine-protein kinases to trigger their dimerization with SERK proteins and subsequent signaling. Expressed in stems, hypocotyls, cotyledons, leaves, flowers, shoot apex, siliques, stamens and petals.

It localises to the endoplasmic reticulum. The protein localises to the secreted. Its function is as follows. Signaling peptide (root growth factor) that regulates the pattern of root growth and lateral root development by modulating the length and the number of cortical cells in the root apical meristem (RAM), and the anticlinal asymmetric cell divisions in lateral root initiation cells. Also involved in the regulation of hypocotyl bending and root gravitropism in a PIN2-traffic dependent manner, thus influencing the formation of auxin gradients. Maintains the postembryonic root stem cell niche. The chain is Protein GOLVEN 1 from Arabidopsis thaliana (Mouse-ear cress).